We begin with the raw amino-acid sequence, 719 residues long: UvrABC system protein B (719 aa).

The Helicase ATP-binding domain occupies 49–435 (RRINAGERDV…TGGEFVEQVI (387 aa)). Position 62 to 69 (62 to 69 (GATGTGKS)) interacts with ATP. The short motif at 115–138 (YYDYYQPEAYIAQTDTYIEKDSSI) is the Beta-hairpin element. The 154-residue stretch at 453–606 (QIDDLIGEIR…QIAYNEANGI (154 aa)) folds into the Helicase C-terminal domain. The interval 635-654 (GGSGRNASRGRRAQGEPGRA) is disordered. A UVR domain is found at 674 to 709 (ADLIKDLTAQMMAAARDLQFELAARFRDEIADLKRE).

The protein belongs to the UvrB family. As to quaternary structure, forms a heterotetramer with UvrA during the search for lesions. Interacts with UvrC in an incision complex.

It localises to the cytoplasm. Its function is as follows. The UvrABC repair system catalyzes the recognition and processing of DNA lesions. A damage recognition complex composed of 2 UvrA and 2 UvrB subunits scans DNA for abnormalities. Upon binding of the UvrA(2)B(2) complex to a putative damaged site, the DNA wraps around one UvrB monomer. DNA wrap is dependent on ATP binding by UvrB and probably causes local melting of the DNA helix, facilitating insertion of UvrB beta-hairpin between the DNA strands. Then UvrB probes one DNA strand for the presence of a lesion. If a lesion is found the UvrA subunits dissociate and the UvrB-DNA preincision complex is formed. This complex is subsequently bound by UvrC and the second UvrB is released. If no lesion is found, the DNA wraps around the other UvrB subunit that will check the other stand for damage. This is UvrABC system protein B from Mycobacterium tuberculosis (strain CDC 1551 / Oshkosh).